Here is a 159-residue protein sequence, read N- to C-terminus: MTVFEGRFTDAGGLRIAVVVARFNDLVTGKLLSGCLDCLSRHGIDVAETSSQLDLAWVPGSFEIPLLAKRLASSGRYDVVITLGAVIRGDTPHFDVVVAEVSKGVAAVARESGVPVIFGVLTTDTLQQALERAGIKSNLGWNYGLQALEMGSLMRSVPA.

Residues F23, S61–E63, and A85–I87 contribute to the 5-amino-6-(D-ribitylamino)uracil site. Position 90–91 (D90–T91) interacts with (2S)-2-hydroxy-3-oxobutyl phosphate. The active-site Proton donor is the H93. F118 provides a ligand contact to 5-amino-6-(D-ribitylamino)uracil. Position 132 (R132) interacts with (2S)-2-hydroxy-3-oxobutyl phosphate.

The protein belongs to the DMRL synthase family.

The catalysed reaction is (2S)-2-hydroxy-3-oxobutyl phosphate + 5-amino-6-(D-ribitylamino)uracil = 6,7-dimethyl-8-(1-D-ribityl)lumazine + phosphate + 2 H2O + H(+). It functions in the pathway cofactor biosynthesis; riboflavin biosynthesis; riboflavin from 2-hydroxy-3-oxobutyl phosphate and 5-amino-6-(D-ribitylamino)uracil: step 1/2. In terms of biological role, catalyzes the formation of 6,7-dimethyl-8-ribityllumazine by condensation of 5-amino-6-(D-ribitylamino)uracil with 3,4-dihydroxy-2-butanone 4-phosphate. This is the penultimate step in the biosynthesis of riboflavin. The chain is 6,7-dimethyl-8-ribityllumazine synthase from Synechococcus sp. (strain RCC307).